The following is a 526-amino-acid chain: Peptide chain release factor 3 (526 aa).

One can recognise a tr-type G domain in the interval 8 to 277; it reads GKRRTFAIIS…GLTDWAPAPQ (270 aa). GTP-binding positions include 17 to 24, 85 to 89, and 139 to 142; these read SHPDAGKT, DTPGH, and NKLD.

The protein belongs to the TRAFAC class translation factor GTPase superfamily. Classic translation factor GTPase family. PrfC subfamily.

It localises to the cytoplasm. Functionally, increases the formation of ribosomal termination complexes and stimulates activities of RF-1 and RF-2. It binds guanine nucleotides and has strong preference for UGA stop codons. It may interact directly with the ribosome. The stimulation of RF-1 and RF-2 is significantly reduced by GTP and GDP, but not by GMP. The protein is Peptide chain release factor 3 of Aliivibrio fischeri (strain ATCC 700601 / ES114) (Vibrio fischeri).